The sequence spans 161 residues: Cyclic pyranopterin monophosphate synthase (161 aa).

Residues 75–77 and 114–115 contribute to the substrate site; these read MCH and ME. D129 is an active-site residue.

This sequence belongs to the MoaC family. In terms of assembly, homohexamer; trimer of dimers.

The enzyme catalyses (8S)-3',8-cyclo-7,8-dihydroguanosine 5'-triphosphate = cyclic pyranopterin phosphate + diphosphate. It participates in cofactor biosynthesis; molybdopterin biosynthesis. Catalyzes the conversion of (8S)-3',8-cyclo-7,8-dihydroguanosine 5'-triphosphate to cyclic pyranopterin monophosphate (cPMP). This is Cyclic pyranopterin monophosphate synthase from Staphylococcus carnosus (strain TM300).